Reading from the N-terminus, the 106-residue chain is Antitoxin MazE3 (106 aa).

As to quaternary structure, forms a complex with cognate toxin MazF3, possibly with 1:1 stoichiometry.

Functionally, antitoxin component of a type II toxin-antitoxin (TA) system. Upon expression in E.coli and M.smegmatis neutralizes the effect of cognate toxin MazF3. Overexpression of MazE3 alone decreased persister cells formation in M.smegmatis upon challenge with gentamicin or kanamycin. This is Antitoxin MazE3 (mazE3) from Mycobacterium tuberculosis (strain ATCC 25618 / H37Rv).